The sequence spans 283 residues: Pantothenate synthetase (283 aa).

Position 30-37 (Met30–His37) interacts with ATP. His37 (proton donor) is an active-site residue. Gln61 contacts (R)-pantoate. Gln61 serves as a coordination point for beta-alanine. Gly147 to Asp150 contacts ATP. Gln153 provides a ligand contact to (R)-pantoate. ATP is bound by residues Ile176 and Met184–Arg187.

The protein belongs to the pantothenate synthetase family. As to quaternary structure, homodimer.

It localises to the cytoplasm. The enzyme catalyses (R)-pantoate + beta-alanine + ATP = (R)-pantothenate + AMP + diphosphate + H(+). It participates in cofactor biosynthesis; (R)-pantothenate biosynthesis; (R)-pantothenate from (R)-pantoate and beta-alanine: step 1/1. In terms of biological role, catalyzes the condensation of pantoate with beta-alanine in an ATP-dependent reaction via a pantoyl-adenylate intermediate. The protein is Pantothenate synthetase of Cytophaga hutchinsonii (strain ATCC 33406 / DSM 1761 / CIP 103989 / NBRC 15051 / NCIMB 9469 / D465).